Here is a 647-residue protein sequence, read N- to C-terminus: Acetyl-coenzyme A synthetase (647 aa).

Residues 190–193 (RGGR), T308, and N332 each bind CoA. ATP-binding positions include 384–386 (GEP), 408–413 (DTWWQT), D497, and R512. S520 contacts CoA. Position 523 (R523) interacts with ATP. Positions 534, 536, and 539 each coordinate Mg(2+). R581 contacts CoA. Position 606 is an N6-acetyllysine (K606).

The protein belongs to the ATP-dependent AMP-binding enzyme family. Mg(2+) is required as a cofactor. Post-translationally, acetylated. Deacetylation by the SIR2-homolog deacetylase activates the enzyme.

The enzyme catalyses acetate + ATP + CoA = acetyl-CoA + AMP + diphosphate. Catalyzes the conversion of acetate into acetyl-CoA (AcCoA), an essential intermediate at the junction of anabolic and catabolic pathways. AcsA undergoes a two-step reaction. In the first half reaction, AcsA combines acetate with ATP to form acetyl-adenylate (AcAMP) intermediate. In the second half reaction, it can then transfer the acetyl group from AcAMP to the sulfhydryl group of CoA, forming the product AcCoA. This chain is Acetyl-coenzyme A synthetase, found in Parvibaculum lavamentivorans (strain DS-1 / DSM 13023 / NCIMB 13966).